Reading from the N-terminus, the 459-residue chain is GTPase Der (459 aa).

EngA-type G domains follow at residues 3-167 (FTLA…PEPV) and 188-363 (IRVA…AVWN). Residues 9-16 (GRPNVGKS), 56-60 (DTAGL), 119-122 (NKSE), 194-201 (GRPNAGKS), 241-245 (DTAGL), and 306-309 (NKWD) each bind GTP. Positions 364-448 (RRVPTAALNR…PVRITLREKA (85 aa)) constitute a KH-like domain.

The protein belongs to the TRAFAC class TrmE-Era-EngA-EngB-Septin-like GTPase superfamily. EngA (Der) GTPase family. In terms of assembly, associates with the 50S ribosomal subunit.

In terms of biological role, GTPase that plays an essential role in the late steps of ribosome biogenesis. This chain is GTPase Der, found in Rhodopseudomonas palustris (strain TIE-1).